An 834-amino-acid polypeptide reads, in one-letter code: Enhancer of filamentation 1 (834 aa).

The interval 1–505 (MKYKNLMARA…HQILSQTSHD (505 aa)) is required for interaction with ITCH. The region spanning 3-65 (YKNLMARALY…PGNRVKLLIG (63 aa)) is the SH3 domain. A phosphotyrosine; by ABL1 mark is found at tyrosine 92, tyrosine 164, tyrosine 166, tyrosine 177, tyrosine 189, tyrosine 214, and tyrosine 223. Residues 102 to 229 (RDTIYQVPPS…KGVYAIPPSA (128 aa)) form an interacts strongly with spindle-regulatory protein D1M1 region. A disordered region spans residues 238–260 (EKDYDFPPPMRQAGRPDLRPEGV). Tyrosine 279 carries the phosphotyrosine; by ABL1 modification. A disordered region spans residues 291-316 (ARRHQSLSPNHPPPQLGQSVGSQNDA). The residue at position 296 (serine 296) is a Phosphoserine. Residues 306-315 (LGQSVGSQND) show a composition bias toward polar residues. The residue at position 317 (tyrosine 317) is a Phosphotyrosine; by ABL1. 2 disordered regions span residues 328-398 (PPAE…SPAQ) and 560-623 (GPGS…GSER). The span at 332-344 (TSEKANPQERDGV) shows a compositional bias: basic and acidic residues. The segment at 351-834 (NPPDAKGSRD…KRSLLEMATF (484 aa)) is interacts with CTTN. A Caspase cleavage related site motif is present at residues 360–363 (DLVD). Serine 369 is subject to Phosphoserine. A compositionally biased stretch (low complexity) spans 369 to 395 (SFSSTGSTRSNMSTSSTSSKESSLSAS). The tract at residues 710–760 (FYYDQCETHFISLLNAIDALFSCVSSAQPPRIFVAHSKFVILSAHKLVFIG) is divergent helix-loop-helix motif. Residues 710–834 (FYYDQCETHF…KRSLLEMATF (125 aa)) form a required for interaction with PLK1 region. Serine 780 is subject to Phosphoserine; by CSNK1D and CSNK1E. Threonine 804 carries the phosphothreonine; by CSNK1E modification.

Belongs to the CAS family. Homodimer. Forms heterodimers with BCAR1/p130cas. Forms complexes with PTK2B/RAFTK, adapter protein CRKL and LYN kinase. Part of a complex composed of NEDD9, AURKA and CTTN; within the complex NEDD9 acts as a scaffold protein and is required for complex formation. Part of a ternary complex composed of SMAD3, ITCH/AIP4 and NEDD9/HEF1; within the complex NEDD9/HEF1 interacts (via N-terminus) with ITCH/AIP4 (via WW domains); the complex mediates ubiquitination and proteasomal degradation of NEDD9/HEF1. Interacts with SMAD3; the interaction promotes NEDD9 ubiquitination and proteasomal degradation. Interacts with ID2. Interacts with CTTN (via N-terminus). Interacts with MICAL. Interacts with TXNL4/DIM1. Interacts with BCAR3 (via Ras-GEF domain). Interacts with SH2D3C isoform 1 and isoform 2. Interacts with ECT2. Interacts with PTPN11/SHP-2 (via SH2 domains); the interaction is enhanced when NEDD9/CAS-L is tyrosine phosphorylated. Interacts (via C-terminus) with PLK1 (via polo box domains). Interacts with NKX2-5. Interacts with SMAD3; the interaction is inhibited by oxidation of NEDD9. Interacts with NEDD9/HEF1; interaction is induced by CXCL12 promotion of ABL-mediated phosphorylation of NEDD9/HEF1. Interacts (via SH3 domain) with PTK2/FAK. Interacts with FYN; in the presence of PTK2. Interacts with INPPL1/SHIP2. Post-translationally, cell cycle-regulated processing produces four isoforms: p115, p105, p65, and p55. Isoform p115 arises from p105 phosphorylation and appears later in the cell cycle. Isoform p55 arises from p105 as a result of cleavage at a caspase cleavage-related site and it appears specifically at mitosis. The p65 isoform is poorly detected. In terms of processing, polyubiquitinated by ITCH/AIP4, leading to proteasomal degradation. PTK2/FAK1 phosphorylates the protein at the YDYVHL motif (conserved among all cas proteins) following integrin stimulation. The SRC family kinases (FYN, SRC, LCK and CRK) are recruited to the phosphorylated sites and can phosphorylate other tyrosine residues. Ligation of either integrin beta-1 or B-cell antigen receptor on tonsillar B-cells and B-cell lines promotes tyrosine phosphorylation and both integrin and BCR-mediated tyrosine phosphorylation requires an intact actin network. Phosphorylation is required to recruit NEDD9 to T-cell receptor microclusters at the periphery of newly formed immunological synapses. In fibroblasts transformation with oncogene v-ABL results in an increase in tyrosine phosphorylation. Transiently phosphorylated following CD3 cross-linking and this phosphorylated form binds to CRKL and C3G. A mutant lacking the SH3 domain is phosphorylated upon CD3 cross-linking but not upon integrin beta-1 cross-linking. Tyrosine phosphorylation occurs upon stimulation of the G-protein coupled C1a calcitonin receptor. Calcitonin-stimulated tyrosine phosphorylation is mediated by calcium- and protein kinase C-dependent mechanisms and requires the integrity of the actin cytoskeleton. Phosphorylation at Ser-369 induces proteasomal degradation. Phosphorylated by LYN. Phosphorylation at Ser-780 by CSNK1D or CSNK1E, or phosphorylation of Thr-804 by CSNK1E enhances the interaction of NEDD9 with PLK1. Expressed in B-cells (at protein level). Expressed in the respiratory epithelium of the main bronchi to the bronchioles in the lungs (at protein level). High levels detected in kidney, lung, and placenta. Expressed in lymphocytes.

The protein resides in the cytoplasm. The protein localises to the cell cortex. It localises to the nucleus. Its subcellular location is the golgi apparatus. It is found in the cell projection. The protein resides in the lamellipodium. The protein localises to the cell junction. It localises to the focal adhesion. Its subcellular location is the cytoskeleton. It is found in the spindle pole. The protein resides in the cilium. The protein localises to the cilium basal body. It localises to the basolateral cell membrane. Its subcellular location is the spindle. In terms of biological role, scaffolding protein which plays a central coordinating role for tyrosine-kinase-based signaling related to cell adhesion. As a focal adhesion protein, plays a role in embryonic fibroblast migration. May play an important role in integrin beta-1 or B cell antigen receptor (BCR) mediated signaling in B- and T-cells. Integrin beta-1 stimulation leads to recruitment of various proteins including CRKL and SHPTP2 to the tyrosine phosphorylated form. Promotes adhesion and migration of lymphocytes; as a result required for the correct migration of lymphocytes to the spleen and other secondary lymphoid organs. Plays a role in the organization of T-cell F-actin cortical cytoskeleton and the centralization of T-cell receptor microclusters at the immunological synapse. Negatively regulates cilia outgrowth in polarized cysts. Modulates cilia disassembly via activation of AURKA-mediated phosphorylation of HDAC6 and subsequent deacetylation of alpha-tubulin. Positively regulates RANKL-induced osteoclastogenesis. Required for the maintenance of hippocampal dendritic spines in the dentate gyrus and CA1 regions, thereby involved in spatial learning and memory. This Homo sapiens (Human) protein is Enhancer of filamentation 1.